A 436-amino-acid polypeptide reads, in one-letter code: Glutamyl-tRNA reductase (436 aa).

Residues 52–55, Ser-105, 110–112, and Gln-116 contribute to the substrate site; these read TCHR and EDQ. The active-site Nucleophile is Cys-53. 184 to 189 contacts NADP(+); the sequence is GAGEMG.

The protein belongs to the glutamyl-tRNA reductase family. Homodimer.

The enzyme catalyses (S)-4-amino-5-oxopentanoate + tRNA(Glu) + NADP(+) = L-glutamyl-tRNA(Glu) + NADPH + H(+). It participates in porphyrin-containing compound metabolism; protoporphyrin-IX biosynthesis; 5-aminolevulinate from L-glutamyl-tRNA(Glu): step 1/2. Functionally, catalyzes the NADPH-dependent reduction of glutamyl-tRNA(Glu) to glutamate 1-semialdehyde (GSA). In Halobacterium salinarum (strain ATCC 29341 / DSM 671 / R1), this protein is Glutamyl-tRNA reductase.